The chain runs to 125 residues: Large ribosomal subunit protein bL12 (125 aa).

It belongs to the bacterial ribosomal protein bL12 family. As to quaternary structure, homodimer. Part of the ribosomal stalk of the 50S ribosomal subunit. Forms a multimeric L10(L12)X complex, where L10 forms an elongated spine to which 2 to 4 L12 dimers bind in a sequential fashion. Binds GTP-bound translation factors.

In terms of biological role, forms part of the ribosomal stalk which helps the ribosome interact with GTP-bound translation factors. Is thus essential for accurate translation. The chain is Large ribosomal subunit protein bL12 from Methylobacterium radiotolerans (strain ATCC 27329 / DSM 1819 / JCM 2831 / NBRC 15690 / NCIMB 10815 / 0-1).